The following is a 177-amino-acid chain: MILSDKTILDYIKSSKIIVEPFDESSLQCSSLDLRLSNSIAFYEELDIIDIKSPIQAKTVTFEEYFIINPGEFLLASTMEYIKLPEFITAFVEGRSSLGRLGLFIENAGWVDAGFEGQITLELYNANKYPIKLYKGMRICQLVFAKLDEIPSKVYRGKYLCQKGATPSKIFMDFDKK.

Residues 95-100 (RSSLGR), aspartate 112, 120-122 (TLE), glutamine 141, tyrosine 155, and glutamine 162 each bind dCTP. The active-site Proton donor/acceptor is the glutamate 122.

This sequence belongs to the dCTP deaminase family. In terms of assembly, homotrimer.

The catalysed reaction is dCTP + 2 H2O = dUMP + NH4(+) + diphosphate. It participates in pyrimidine metabolism; dUMP biosynthesis; dUMP from dCTP: step 1/1. In terms of biological role, bifunctional enzyme that catalyzes both the deamination of dCTP to dUTP and the hydrolysis of dUTP to dUMP without releasing the toxic dUTP intermediate. This is dCTP deaminase, dUMP-forming from Hydrogenobaculum sp. (strain Y04AAS1).